Here is a 199-residue protein sequence, read N- to C-terminus: Adenylyl-sulfate kinase (199 aa).

Residue 31–38 coordinates ATP; sequence GLSGSGKS. Catalysis depends on S105, which acts as the Phosphoserine intermediate.

It belongs to the APS kinase family.

The catalysed reaction is adenosine 5'-phosphosulfate + ATP = 3'-phosphoadenylyl sulfate + ADP + H(+). Its pathway is sulfur metabolism; hydrogen sulfide biosynthesis; sulfite from sulfate: step 2/3. Its function is as follows. Catalyzes the synthesis of activated sulfate. This is Adenylyl-sulfate kinase from Marinobacter nauticus (strain ATCC 700491 / DSM 11845 / VT8) (Marinobacter aquaeolei).